We begin with the raw amino-acid sequence, 411 residues long: Putative metal tolerance protein C3 (411 aa).

Topologically, residues 1–115 (MEVNYCPETP…DRAERAAQEL (115 aa)) are cytoplasmic. The helical transmembrane segment at 116–136 (AMQISNWANIFLLALKIYATV) threads the bilayer. At 137–140 (KSGS) the chain is on the vacuolar side. The chain crosses the membrane as a helical span at residues 141-161 (IAIAASTLDSLLDLMAGGILW). Topologically, residues 162–184 (FTHLSMKNVNIYKYPIGKLRVQP) are cytoplasmic. The chain crosses the membrane as a helical span at residues 185–205 (VGIIIFAAVMATLGFQVLLVA). The Vacuolar portion of the chain corresponds to 206-222 (AEQLISNEPSEKMNHVQ). A helical membrane pass occupies residues 223–243 (LIWLYSIMLSATAIKLVLWIY). Over 244-262 (CKSSRNHIVRAYAKDHHFD) the chain is Cytoplasmic. The chain crosses the membrane as a helical span at residues 263–283 (VVTNVLGLVAAVLANAFYWWL). Over 284 to 287 (DPTG) the chain is Vacuolar. A helical transmembrane segment spans residues 288-308 (AILLAIYTIVNWSGTVMENAV). At 309-390 (SLIGQSAPPE…LPEVERAFVH (82 aa)) the chain is on the cytoplasmic side.

The protein belongs to the cation diffusion facilitator (CDF) transporter (TC 2.A.4) family.

The protein resides in the vacuole membrane. In terms of biological role, involved in sequestration of excess metal in the cytoplasm into vacuoles to maintain metal homeostasis. In Arabidopsis thaliana (Mouse-ear cress), this protein is Putative metal tolerance protein C3 (MTPC3).